Reading from the N-terminus, the 436-residue chain is G2/mitotic-specific cyclin-B (436 aa).

The segment covering 1–17 (MSTINNPLNIKTRSHSS) has biased composition (polar residues). The tract at residues 1–33 (MSTINNPLNIKTRSHSSMGGGMIMDENKVPKSS) is disordered.

The protein belongs to the cyclin family. Cyclin AB subfamily. In terms of assembly, interacts with the cdk1 protein kinase to form a serine/threonine kinase holoenzyme complex also known as maturation promoting factor (MPF). The cyclin subunit imparts substrate specificity to the complex.

Its function is as follows. Essential for the control of the cell cycle at the G2/M (mitosis) transition. The polypeptide is G2/mitotic-specific cyclin-B (cycB) (Dictyostelium discoideum (Social amoeba)).